The chain runs to 153 residues: Probable disulfide formation protein (153 aa).

A helical transmembrane segment spans residues 4-23 (DTRLYLAWLVALAATLGSLY). A disulfide bridge links Cys-33 with Cys-36. 2 helical membrane-spanning segments follow: residues 38–57 (AQRI…AFVG) and 64–81 (YVLP…FQNL). A disulfide bridge connects residues Cys-93 and Cys-101. A helical membrane pass occupies residues 117-139 (RALTIPVLSMIAFALILALLSWP).

The protein belongs to the DsbB family. BdbC subfamily.

It is found in the cell membrane. Functionally, required for disulfide bond formation in some proteins. The chain is Probable disulfide formation protein from Deinococcus radiodurans (strain ATCC 13939 / DSM 20539 / JCM 16871 / CCUG 27074 / LMG 4051 / NBRC 15346 / NCIMB 9279 / VKM B-1422 / R1).